A 299-amino-acid chain; its full sequence is GDNF family receptor alpha-4 (299 aa).

An N-terminal signal peptide occupies residues 1 to 20 (MVRCLGPALLLLLLLGSASS). Residues 145-198 (RGLSPAHRPPAAQASPPGLSGLVHPSAQRPRRLPAGPGRPLPARLRGPRGVPAG) are disordered. Residues 177–198 (LPAGPGRPLPARLRGPRGVPAG) are compositionally biased toward low complexity. The N-linked (GlcNAc...) asparagine glycan is linked to asparagine 208. Glycine 278 carries GPI-anchor amidated glycine lipidation. Positions 279–299 (RALERRSLLSILPVLALPALL) are cleaved as a propeptide — removed in mature form.

Belongs to the GDNFR family. In terms of assembly, interacts with ARTN ligand and RET: forms a 2:2:2 ternary complex composed of ARTN ligand, GFRA3 and RET receptor. Interacts with SORL1. In terms of tissue distribution, predominantly expressed in the adult thyroid gland. Low levels also found in fetal adrenal and thyroid glands.

It is found in the cell membrane. Its subcellular location is the secreted. In terms of biological role, receptor for persephin (PSPN), a growth factor that exhibits neurotrophic activity on mesencephalic dopaminergic and motor neurons. Acts by binding to its coreceptor, GFRA4, leading to autophosphorylation and activation of the RET receptor. May be important in C-cell development and, in the postnatal development of the adrenal medulla. The sequence is that of GDNF family receptor alpha-4 (GFRA4) from Homo sapiens (Human).